The following is a 547-amino-acid chain: Peptide chain release factor 3 (547 aa).

In terms of domain architecture, tr-type G spans 24–294 (DRRRNFAIIS…AFLQYAAKPE (271 aa)). GTP-binding positions include 33–40 (SHPDAGKT), 101–105 (DTPGH), and 155–158 (NKLD).

It belongs to the TRAFAC class translation factor GTPase superfamily. Classic translation factor GTPase family. PrfC subfamily.

It is found in the cytoplasm. Its function is as follows. Increases the formation of ribosomal termination complexes and stimulates activities of RF-1 and RF-2. It binds guanine nucleotides and has strong preference for UGA stop codons. It may interact directly with the ribosome. The stimulation of RF-1 and RF-2 is significantly reduced by GTP and GDP, but not by GMP. The sequence is that of Peptide chain release factor 3 (prfC) from Synechocystis sp. (strain ATCC 27184 / PCC 6803 / Kazusa).